The chain runs to 295 residues: MIEVPTTTDSQKLLHQLNALLEQESRCQPKVCGLRLIESAHDNGLRMTARLRDFEVKDLLSLTQFFGFDTETFSLAVNLLDRFLSKMKVQPKHLGCVGLSCFYLAVKSLEEERNVPLATDLIRISQYRFTVSDLMRMEKIVLEKVCWKVKATTAFQFLQLYYSLLQESLPYERRNSLNFERLEAQLKACYCRIIFSKAKPSVLALSIIALEIQALKCVELAEGAECLQKHSKINGRDLTFWQELVSKCLTEYSSNKCSKPNVQKLKWIVSGRTARQLKHSYYRITHLPTIPEMVP.

The protein belongs to the cyclin family. Cyclin G subfamily.

It is found in the nucleus. In terms of biological role, may play a role in growth regulation. Is associated with G2/M phase arrest in response to DNA damage. May be an intermediate by which p53 mediates its role as an inhibitor of cellular proliferation. The sequence is that of Cyclin-G1 (CCNG1) from Sus scrofa (Pig).